A 339-amino-acid polypeptide reads, in one-letter code: Adenosine deaminase (339 aa).

Zn(2+) contacts are provided by histidine 15 and histidine 17. Substrate contacts are provided by histidine 17, aspartate 19, and glycine 172. Zn(2+) is bound at residue histidine 199. Residue glutamate 202 is the Proton donor of the active site. Zn(2+) is bound at residue aspartate 279.

It belongs to the metallo-dependent hydrolases superfamily. Adenosine and AMP deaminases family. Adenosine deaminase subfamily. It depends on Zn(2+) as a cofactor.

It catalyses the reaction adenosine + H2O + H(+) = inosine + NH4(+). The catalysed reaction is 2'-deoxyadenosine + H2O + H(+) = 2'-deoxyinosine + NH4(+). Functionally, catalyzes the hydrolytic deamination of adenosine and 2-deoxyadenosine. The sequence is that of Adenosine deaminase from Lacticaseibacillus casei (strain BL23) (Lactobacillus casei).